The following is a 389-amino-acid chain: Putative phosphoserine aminotransferase (389 aa).

Arginine 45 provides a ligand contact to L-glutamate. Residues 79-80, tryptophan 114, threonine 169, aspartate 191, and glutamine 214 contribute to the pyridoxal 5'-phosphate site; that span reads GT. Lysine 215 is subject to N6-(pyridoxal phosphate)lysine. 265 to 266 lines the pyridoxal 5'-phosphate pocket; the sequence is NT.

It belongs to the class-V pyridoxal-phosphate-dependent aminotransferase family. SerC subfamily. As to quaternary structure, homodimer. Requires pyridoxal 5'-phosphate as cofactor.

It catalyses the reaction O-phospho-L-serine + 2-oxoglutarate = 3-phosphooxypyruvate + L-glutamate. The enzyme catalyses 4-(phosphooxy)-L-threonine + 2-oxoglutarate = (R)-3-hydroxy-2-oxo-4-phosphooxybutanoate + L-glutamate. The protein operates within amino-acid biosynthesis; L-serine biosynthesis; L-serine from 3-phospho-D-glycerate: step 2/3. It participates in cofactor biosynthesis; pyridoxine 5'-phosphate biosynthesis; pyridoxine 5'-phosphate from D-erythrose 4-phosphate: step 3/5. In terms of biological role, catalyzes the reversible conversion of 3-phosphohydroxypyruvate to phosphoserine and of 3-hydroxy-2-oxo-4-phosphonooxybutanoate to phosphohydroxythreonine. The sequence is that of Putative phosphoserine aminotransferase from Schizosaccharomyces pombe (strain 972 / ATCC 24843) (Fission yeast).